Here is a 343-residue protein sequence, read N- to C-terminus: Palmitoyltransferase ZDHHC4 (343 aa).

The Lumenal portion of the chain corresponds to 1-2 (MD). Residues 3–23 (FLVLFLLYLALVLLGFVMICI) traverse the membrane as a helical segment. Over 24 to 67 (GSKTHYLQGLISRGAQVFSYIIPECLQRAMLSVLHYLFHTRNYT) the chain is Cytoplasmic. The chain crosses the membrane as a helical span at residues 68–88 (FVVLHLILQGMVYTEYTWEIF). Residues 89–95 (GLCQQLE) lie on the Lumenal side of the membrane. A helical membrane pass occupies residues 96 to 116 (FSLYYLFLPYLLLIVNLLFFT). Residues 117 to 196 (LSCVTNPGTI…GAWNTRYFLS (80 aa)) lie on the Cytoplasmic side of the membrane. The DHHC domain occupies 149-199 (VRCPTCDLRKPARSKHCSVCNRCVHRFDHHCVWVNNCIGAWNTRYFLSYLF). The S-palmitoyl cysteine intermediate role is filled by Cys179. The chain crosses the membrane as a helical span at residues 197-217 (YLFTLTASAATMAVVSTVFLV). At 218–255 (RLVVMSDVYLQTYVDDLGHLQVVDTVFLVQYLFLTFPR) the chain is on the lumenal side. Residues 256–276 (IVFLVGFVVVLSFLLGGYLCF) traverse the membrane as a helical segment. Over 277-343 (CLYLAATNQT…ATACYERKEK (67 aa)) the chain is Cytoplasmic. A Di-lysine motif motif is present at residues 340–343 (RKEK).

The protein belongs to the DHHC palmitoyltransferase family. Interacts with CPT1A.

The protein localises to the endoplasmic reticulum membrane. It is found in the golgi apparatus membrane. It localises to the cell membrane. The enzyme catalyses L-cysteinyl-[protein] + hexadecanoyl-CoA = S-hexadecanoyl-L-cysteinyl-[protein] + CoA. In terms of biological role, palmitoyltransferase that could catalyze the addition of palmitate onto protein substrates including the D(2) dopamine receptor DRD2, GSK3B or MAVS. Mediates GSK3B palmitoylation to prevent its AKT1-mediated phosphorylation leading to activation of the STAT3 signaling pathway. Also catalyzes MAVS palmitoylation which promotes its stabilization and activation by inhibiting 'Lys-48'- but facilitating 'Lys-63'-linked ubiquitination. This is Palmitoyltransferase ZDHHC4 from Bos taurus (Bovine).